An 81-amino-acid chain; its full sequence is uncharacterized protein (81 aa).

The tract at residues 1 to 58 (MPQSKQQFKRQGARQRDSKGKFVKARTGMATAPPAAVSTAAPTASTMTPTGSSTTATI) is disordered. Positions 30–58 (ATAPPAAVSTAAPTASTMTPTGSSTTATI) are enriched in low complexity.

This is an uncharacterized protein from Caenorhabditis elegans.